Consider the following 75-residue polypeptide: uncharacterized protein (75 aa).

The segment at cysteine 43–cysteine 67 adopts a dksA C4-type zinc-finger fold.

This is an uncharacterized protein from Haemophilus influenzae (strain ATCC 51907 / DSM 11121 / KW20 / Rd).